Reading from the N-terminus, the 90-residue chain is Co-chaperonin GroES (90 aa).

Belongs to the GroES chaperonin family. As to quaternary structure, heptamer of 7 subunits arranged in a ring. Interacts with the chaperonin GroEL.

It is found in the cytoplasm. Its function is as follows. Together with the chaperonin GroEL, plays an essential role in assisting protein folding. The GroEL-GroES system forms a nano-cage that allows encapsulation of the non-native substrate proteins and provides a physical environment optimized to promote and accelerate protein folding. GroES binds to the apical surface of the GroEL ring, thereby capping the opening of the GroEL channel. This Thermosipho africanus (strain TCF52B) protein is Co-chaperonin GroES.